The sequence spans 24 residues: MTNEEIKRLVDEVKEGVIAXRRHL.

Belongs to the peptidase M20 family. As to quaternary structure, homotetramer. Requires Co(2+) as cofactor.

The enzyme catalyses an N-acyl-L-amino acid + H2O = an L-alpha-amino acid + a carboxylate. It catalyses the reaction an N-acetyl-L-cysteine-S-conjugate + H2O = an S-substituted L-cysteine + acetate. This is N-acyl-L-amino acid amidohydrolase from Parageobacillus thermoglucosidasius (Geobacillus thermoglucosidasius).